Here is an 86-residue protein sequence, read N- to C-terminus: MDPYAVIMKPHVTEKSMNLIDQNNELAFVVMRKSTKKDVRRAFEELFAVKVERVNTQVTPRGQKIAYIKLAKEHSAEDIAVKLGVF.

The protein belongs to the universal ribosomal protein uL23 family. As to quaternary structure, part of the 50S ribosomal subunit. Contacts protein L29.

In terms of biological role, binds to 23S rRNA. One of the proteins that surrounds the polypeptide exit tunnel on the outside of the ribosome. This Methanothermobacter thermautotrophicus (strain ATCC 29096 / DSM 1053 / JCM 10044 / NBRC 100330 / Delta H) (Methanobacterium thermoautotrophicum) protein is Large ribosomal subunit protein uL23.